Reading from the N-terminus, the 251-residue chain is NADPH-dependent oxidoreductase (251 aa).

Belongs to the flavin oxidoreductase frp family. FMN is required as a cofactor.

Reduces FMN, organic nitro compounds and disulfide DTNB. Involved in maintenance of the cellular redox state and the disulfide stress response. The protein is NADPH-dependent oxidoreductase (nfrA) of Staphylococcus aureus (strain Mu50 / ATCC 700699).